The chain runs to 881 residues: Alanine--tRNA ligase (881 aa).

The Zn(2+) site is built by H566, H570, C668, and H672.

This sequence belongs to the class-II aminoacyl-tRNA synthetase family. It depends on Zn(2+) as a cofactor.

It is found in the cytoplasm. The catalysed reaction is tRNA(Ala) + L-alanine + ATP = L-alanyl-tRNA(Ala) + AMP + diphosphate. Functionally, catalyzes the attachment of alanine to tRNA(Ala) in a two-step reaction: alanine is first activated by ATP to form Ala-AMP and then transferred to the acceptor end of tRNA(Ala). Also edits incorrectly charged Ser-tRNA(Ala) and Gly-tRNA(Ala) via its editing domain. The sequence is that of Alanine--tRNA ligase from Frankia alni (strain DSM 45986 / CECT 9034 / ACN14a).